Consider the following 600-residue polypeptide: MNCYKTHTCEELRKNDVEKEVTLSGWLYRKRDHGNLIFVDLRDFYGITQLVFNNDKDFFDEISNLKLESVITVTGIVEARTEDTVNSSISTGEIEVIVNNLRVESEVEFHFDEEIAKEERSILVSITGEQEYPENMRFKYRFLDLRREKVRNNIILRSQIIAELRKLMIERGFLEIQTPILTASSPEGARDYLVPSRLNPGKFYALPQAPQIFKQLLMVSGFDKYFQIAPCFRDEDARADRSPGEFYQLDLEMSFVTQEDIFQIIESTLYRVFAKFSRKSVDKDFPRITYKEAMLKYGSDKPDLRNPLLISDVTEIFRDSGFNIFKSNIERGMVVRAIPAPKTAEEPRSFFDKKIEHAQKEFGAKGLGYITFDKDGTAKGPIAKFLDENRLNHIREATNIEPGDSVFFASDKENEAANIAGKVRTLLGSELSLIDDNIFRFCWIIDFPYFVYDDKSKKIDFFHNPFSMPHGGLKDLEDKNPLDILAYQYDLVCNGIELSSGAIRNNKLDIMYKAFAIAGYSRGEVDTRFGALVRAFRFGVPPHGGIAPGVDRIVMLLADEPNIREVICFPMNQQGEDVLMGAPSKVEDKHLRELSLKVIE.

Glu187 provides a ligand contact to L-aspartate. The segment at 211–214 (QIFK) is aspartate. The L-aspartate site is built by Arg233 and His463. 233-235 (RDE) provides a ligand contact to ATP. Position 497 (Glu497) interacts with ATP. Arg504 serves as a coordination point for L-aspartate. An ATP-binding site is contributed by 549–552 (GVDR).

Belongs to the class-II aminoacyl-tRNA synthetase family. Type 1 subfamily. Homodimer.

It is found in the cytoplasm. It catalyses the reaction tRNA(Asx) + L-aspartate + ATP = L-aspartyl-tRNA(Asx) + AMP + diphosphate. Its function is as follows. Aspartyl-tRNA synthetase with relaxed tRNA specificity since it is able to aspartylate not only its cognate tRNA(Asp) but also tRNA(Asn). Reaction proceeds in two steps: L-aspartate is first activated by ATP to form Asp-AMP and then transferred to the acceptor end of tRNA(Asp/Asn). The protein is Aspartate--tRNA(Asp/Asn) ligase of Wolbachia pipientis wMel.